Consider the following 156-residue polypeptide: 6,7-dimethyl-8-ribityllumazine synthase (156 aa).

5-amino-6-(D-ribitylamino)uracil-binding positions include Phe-23, 57 to 59 (AFE), and 81 to 83 (AVI). Position 86-87 (86-87 (ST)) interacts with (2S)-2-hydroxy-3-oxobutyl phosphate. His-89 serves as the catalytic Proton donor. A 5-amino-6-(D-ribitylamino)uracil-binding site is contributed by Phe-114. (2S)-2-hydroxy-3-oxobutyl phosphate is bound at residue Arg-128.

Belongs to the DMRL synthase family.

The catalysed reaction is (2S)-2-hydroxy-3-oxobutyl phosphate + 5-amino-6-(D-ribitylamino)uracil = 6,7-dimethyl-8-(1-D-ribityl)lumazine + phosphate + 2 H2O + H(+). The protein operates within cofactor biosynthesis; riboflavin biosynthesis; riboflavin from 2-hydroxy-3-oxobutyl phosphate and 5-amino-6-(D-ribitylamino)uracil: step 1/2. In terms of biological role, catalyzes the formation of 6,7-dimethyl-8-ribityllumazine by condensation of 5-amino-6-(D-ribitylamino)uracil with 3,4-dihydroxy-2-butanone 4-phosphate. This is the penultimate step in the biosynthesis of riboflavin. The protein is 6,7-dimethyl-8-ribityllumazine synthase of Campylobacter curvus (strain 525.92).